A 243-amino-acid polypeptide reads, in one-letter code: Ubiquinone/menaquinone biosynthesis C-methyltransferase UbiE (243 aa).

S-adenosyl-L-methionine contacts are provided by residues Thr69, Asp90, and 116-117 (DA).

Belongs to the class I-like SAM-binding methyltransferase superfamily. MenG/UbiE family.

The enzyme catalyses a 2-demethylmenaquinol + S-adenosyl-L-methionine = a menaquinol + S-adenosyl-L-homocysteine + H(+). It carries out the reaction a 2-methoxy-6-(all-trans-polyprenyl)benzene-1,4-diol + S-adenosyl-L-methionine = a 5-methoxy-2-methyl-3-(all-trans-polyprenyl)benzene-1,4-diol + S-adenosyl-L-homocysteine + H(+). It functions in the pathway quinol/quinone metabolism; menaquinone biosynthesis; menaquinol from 1,4-dihydroxy-2-naphthoate: step 2/2. Its pathway is cofactor biosynthesis; ubiquinone biosynthesis. Its function is as follows. Methyltransferase required for the conversion of demethylmenaquinol (DMKH2) to menaquinol (MKH2) and the conversion of 2-polyprenyl-6-methoxy-1,4-benzoquinol (DDMQH2) to 2-polyprenyl-3-methyl-6-methoxy-1,4-benzoquinol (DMQH2). The chain is Ubiquinone/menaquinone biosynthesis C-methyltransferase UbiE from Paraburkholderia phytofirmans (strain DSM 17436 / LMG 22146 / PsJN) (Burkholderia phytofirmans).